The sequence spans 222 residues: N-(5'-phosphoribosyl)anthranilate isomerase (222 aa).

Belongs to the TrpF family.

It carries out the reaction N-(5-phospho-beta-D-ribosyl)anthranilate = 1-(2-carboxyphenylamino)-1-deoxy-D-ribulose 5-phosphate. Its pathway is amino-acid biosynthesis; L-tryptophan biosynthesis; L-tryptophan from chorismate: step 3/5. The chain is N-(5'-phosphoribosyl)anthranilate isomerase from Xanthomonas oryzae pv. oryzae (strain PXO99A).